We begin with the raw amino-acid sequence, 322 residues long: Cytochrome c biogenesis protein CcsA (322 aa).

The next 8 membrane-spanning stretches (helical) occupy residues 9–29 (ILTH…LITL), 44–64 (GMIA…IYSG), 71–91 (LYES…VPYF), 98–118 (LTTI…SGLL), 143–163 (MILS…LLVI), 226–246 (VISL…VWAN), 253–273 (WSWD…AIYL), and 287–307 (AIVA…VNLL).

Belongs to the CcmF/CycK/Ccl1/NrfE/CcsA family. In terms of assembly, may interact with Ccs1.

Its subcellular location is the plastid. It is found in the chloroplast thylakoid membrane. Required during biogenesis of c-type cytochromes (cytochrome c6 and cytochrome f) at the step of heme attachment. This chain is Cytochrome c biogenesis protein CcsA, found in Guizotia abyssinica (Niger).